Here is an 85-residue protein sequence, read N- to C-terminus: Phosphocarrier protein HPr (85 aa).

The region spanning 1–85 (MYEKQVEITA…HLVALMDQLH (85 aa)) is the HPr domain. His-15 serves as the catalytic Pros-phosphohistidine intermediate.

Belongs to the HPr family.

It is found in the cytoplasm. General (non sugar-specific) component of the phosphoenolpyruvate-dependent sugar phosphotransferase system (sugar PTS). This major carbohydrate active-transport system catalyzes the phosphorylation of incoming sugar substrates concomitantly with their translocation across the cell membrane. The phosphoryl group from phosphoenolpyruvate (PEP) is transferred to the phosphoryl carrier protein HPr by enzyme I. Phospho-HPr then transfers it to the PTS EIIA domain. The sequence is that of Phosphocarrier protein HPr (ptsH) from Vibrio cholerae serotype O1 (strain ATCC 39315 / El Tor Inaba N16961).